We begin with the raw amino-acid sequence, 739 residues long: Polyribonucleotide nucleotidyltransferase (739 aa).

Residues Asp514 and Asp520 each contribute to the Mg(2+) site. The region spanning 580 to 639 (PRIITVKIPVDKIGEVIGPKGKMINQIQEDTGADITIEDDGTIYIGAAQGSQAEAARATI) is the KH domain. In terms of domain architecture, S1 motif spans 651–723 (GERYLGTVVK…SRGKLSLIPV (73 aa)).

Belongs to the polyribonucleotide nucleotidyltransferase family. It depends on Mg(2+) as a cofactor.

The protein resides in the cytoplasm. The catalysed reaction is RNA(n+1) + phosphate = RNA(n) + a ribonucleoside 5'-diphosphate. Involved in mRNA degradation. Catalyzes the phosphorolysis of single-stranded polyribonucleotides processively in the 3'- to 5'-direction. The sequence is that of Polyribonucleotide nucleotidyltransferase from Streptomyces coelicolor (strain ATCC BAA-471 / A3(2) / M145).